A 728-amino-acid polypeptide reads, in one-letter code: Catalase-peroxidase 1 (728 aa).

The tryptophyl-tyrosyl-methioninium (Trp-Tyr) (with M-244) cross-link spans Trp91–Tyr218. Catalysis depends on His92, which acts as the Proton acceptor. A cross-link (tryptophyl-tyrosyl-methioninium (Tyr-Met) (with W-91)) is located at residues Tyr218–Met244. His259 is a heme b binding site.

The protein belongs to the peroxidase family. Peroxidase/catalase subfamily. Homodimer or homotetramer. The cofactor is heme b. Post-translationally, formation of the three residue Trp-Tyr-Met cross-link is important for the catalase, but not the peroxidase activity of the enzyme.

It carries out the reaction H2O2 + AH2 = A + 2 H2O. It catalyses the reaction 2 H2O2 = O2 + 2 H2O. In terms of biological role, bifunctional enzyme with both catalase and broad-spectrum peroxidase activity. The protein is Catalase-peroxidase 1 of Burkholderia ambifaria (strain ATCC BAA-244 / DSM 16087 / CCUG 44356 / LMG 19182 / AMMD) (Burkholderia cepacia (strain AMMD)).